The sequence spans 839 residues: MNLSKGTAAAYCSGYSEDVDVIREREYPLLKDTTYLDHAGTTLYANSLIHSFGRDLTGNLYGNPHSMSASSQLSAQRVDDIRLRALRFFNADPDEFDLVFVANATAGIKLVADALQNSPQGFWYGYYVDAHTSLVGVRELAKMGSRCFVNEDEVDSWISGLGSRREESLGLFAYPAQSNMNGRRVPMRWCEQIRAQKENADNMIYTLLDAASFVSTSPLDLSKIAAAPDFTVLSFYKIFGFPDLGALIVRKSSGDVFKHRKFFGGGTVDMVLTDGNPWHAKKQSSIHQSLEDGTLPFHSIIALDSAFETHGRLFRSMENVASHTRFLAKRLRDRMNALKHYNGTKVCQLYMSPNSSYDDASSQGPILAFNLRNSRGMWIGKSEVERLASIKNIQIRSGTLCNPGGTALSLGWTGADMLRHFSAGMRCGDDHDIMDERPTGILRISLGAMSSLTDVDTFIAFLEEFYVDKPPEGLPVPLTGNVSLHQPSFYVESLSVYPIKSCGAFRIPDGQRWEVRREGLAWDREWCLVHQGTGITLNQKRYPRMALIRPTLDLERCLLRITCGEANSRDGKTLEISLNRIGTNSLTTSLCQNASKPSTVCGDKVVLQAYTSPAVSRFFTDFLGVPCTLARFPPQSSTRFHSRATAAINRDQNYSQKQSPSMPGSFPQAPSSPDPYPTPILLSNESPLLLISRSSVNRLNESIKSASQPCSNPGSAASKKAVAADVFRANVVVAENISTAERPYIEDTWASLSIGSGPEQLRFDVLGSCERCQMVCVDQYTGQRGDEPYATLAKTRKIDRKILFGRHISPVGRPKDAENGCLGTIMVGDAVTPSYDNES.

N6-(pyridoxal phosphate)lysine is present on lysine 237. Cysteine 401 is an active-site residue. Residues 651–662 show a composition bias toward polar residues; the sequence is DQNYSQKQSPSM. The segment at 651–678 is disordered; sequence DQNYSQKQSPSMPGSFPQAPSSPDPYPT. The MOSC domain maps to 656-834; it reads QKQSPSMPGS…IMVGDAVTPS (179 aa).

This sequence belongs to the class-V pyridoxal-phosphate-dependent aminotransferase family. MOCOS subfamily. The cofactor is pyridoxal 5'-phosphate.

It catalyses the reaction Mo-molybdopterin + L-cysteine + AH2 = thio-Mo-molybdopterin + L-alanine + A + H2O. The protein operates within cofactor biosynthesis; molybdopterin biosynthesis. Functionally, sulfurates the molybdenum cofactor. Sulfation of molybdenum is essential for xanthine dehydrogenase (XDH) and aldehyde oxidase (ADO) enzymes in which molybdenum cofactor is liganded by 1 oxygen and 1 sulfur atom in active form. The chain is Molybdenum cofactor sulfurase from Emericella nidulans (strain FGSC A4 / ATCC 38163 / CBS 112.46 / NRRL 194 / M139) (Aspergillus nidulans).